The primary structure comprises 427 residues: Serine protease HTRA2, mitochondrial (427 aa).

The interval 33-57 (HTASSSKGSGGDNSKDQENNGQNKS) is disordered. The chain crosses the membrane as a helical span at residues 67–87 (VFQFCVPFSLGALVSAVLIEG). Residues 78 to 81 (ALVS) carry the IAP-binding motif. The interval 144 to 307 (SNGSGFVIEQ…IPIDYVKVFL (164 aa)) is serine protease. Active-site charge relay system residues include His-162, Asp-194, and Ser-271. Positions 330–415 (MGITMLTLTP…DLEIVILRGV (86 aa)) constitute a PDZ domain.

Belongs to the peptidase S1C family. In terms of assembly, interacts with th/DIAP1 (via BIR 2 domain).

The protein resides in the mitochondrion intermembrane space. The protein localises to the mitochondrion membrane. The enzyme catalyses Cleavage of non-polar aliphatic amino-acids at the P1 position, with a preference for Val, Ile and Met. At the P2 and P3 positions, Arg is selected most strongly with a secondary preference for other hydrophilic residues.. Functionally, serine protease that shows proteolytic activity against a non-specific substrate beta-casein. Promotes or induces cell death either by direct binding to and inhibition of BIRC proteins (also called inhibitor of apoptosis proteins, IAPs), leading to an increase in caspase activity, or by a BIRC inhibition-independent, caspase-independent and serine protease activity-dependent mechanism. Can antagonize antiapoptotic activity of th/Diap1 by directly inducing the degradation of th/Diap1. This is Serine protease HTRA2, mitochondrial from Drosophila persimilis (Fruit fly).